A 166-amino-acid polypeptide reads, in one-letter code: Transmembrane protein 190 (166 aa).

A signal peptide spans 1–21 (MVGSGISALGLLLLMQGSVDA). The Extracellular segment spans residues 22–81 (NGIQGFFYPWSCEGDVWDRESCGGQAAIENPNLCLRLRCCYRDGVCYHQRPDENMRRKHM). Residues 31–71 (WSCEGDVWDRESCGGQAAIENPNLCLRLRCCYRDGVCYHQR) enclose the P-type domain. 3 disulfide bridges follow: C33/C61, C43/C60, and C55/C67. The helical transmembrane segment at 82 to 102 (WALGWTCGSLLFLITSICLFW) threads the bilayer. Topologically, residues 103–166 (WARRQDMLHL…VSGEDTGGEE (64 aa)) are cytoplasmic. The segment at 130 to 166 (LSKDRRSANKSTTVLQSPGGEVETAAAVSGEDTGGEE) is disordered.

As to expression, detected in testis and in a mixture of spermatogenic cells at various stages (testicular germ cells). Not detected in heart, brain, spleen, lung, liver, skeletal muscle and kidney.

Its subcellular location is the membrane. This is Transmembrane protein 190 (Tmem190) from Mus musculus (Mouse).